Consider the following 297-residue polypeptide: Phosphoribosylaminoimidazole-succinocarboxamide synthase (297 aa).

Belongs to the SAICAR synthetase family.

It carries out the reaction 5-amino-1-(5-phospho-D-ribosyl)imidazole-4-carboxylate + L-aspartate + ATP = (2S)-2-[5-amino-1-(5-phospho-beta-D-ribosyl)imidazole-4-carboxamido]succinate + ADP + phosphate + 2 H(+). It functions in the pathway purine metabolism; IMP biosynthesis via de novo pathway; 5-amino-1-(5-phospho-D-ribosyl)imidazole-4-carboxamide from 5-amino-1-(5-phospho-D-ribosyl)imidazole-4-carboxylate: step 1/2. In Mycobacterium sp. (strain JLS), this protein is Phosphoribosylaminoimidazole-succinocarboxamide synthase.